Here is a 180-residue protein sequence, read N- to C-terminus: Stathmin-3 (180 aa).

S-palmitoyl cysteine attachment occurs at residues Cys22 and Cys24. Positions 38–180 constitute an SLD domain; sequence GDMEVKQLDK…NKEQREEMSG (143 aa). Residues Ser50, Ser60, Ser65, Ser68, Ser72, Ser73, and Ser81 each carry the phosphoserine modification. Residues 59–82 are disordered; it reads KSPSDLSPESPMLSSPPKKKDTSL. Over residues 60-74 the composition is skewed to low complexity; sequence SPSDLSPESPMLSSP. Residues 76-179 adopt a coiled-coil conformation; the sequence is KKKDTSLEEL…RNKEQREEMS (104 aa).

The protein belongs to the stathmin family. As to quaternary structure, interacts with STAT3. Interacts with CLU (secreted form); this interaction may act as an important modulator during neuronal differentiation. Post-translationally, N-terminal palmitoylation promotes specific anchoring to the cytosolic leaflet of Golgi membranes and subsequent vesicular trafficking along dendrites and axons. Neuronal Stathmins are substrates for palmitoyltransferases ZDHHC3, ZDHHC7 and ZDHHC15.

It localises to the golgi apparatus. The protein resides in the cell projection. It is found in the growth cone. Its subcellular location is the axon. The protein localises to the cytoplasm. It localises to the cytosol. Its function is as follows. Exhibits microtubule-destabilizing activity, which is antagonized by STAT3. In Macaca fascicularis (Crab-eating macaque), this protein is Stathmin-3 (STMN3).